We begin with the raw amino-acid sequence, 149 residues long: Large ribosomal subunit protein bL9 (149 aa).

This sequence belongs to the bacterial ribosomal protein bL9 family.

Its function is as follows. Binds to the 23S rRNA. This is Large ribosomal subunit protein bL9 from Stenotrophomonas maltophilia (strain K279a).